Consider the following 397-residue polypeptide: Acetate kinase (397 aa).

Asparagine 8 is a binding site for Mg(2+). Lysine 15 provides a ligand contact to ATP. Arginine 89 provides a ligand contact to substrate. The active-site Proton donor/acceptor is the aspartate 146. Residues 206–210, 281–283, and 328–332 contribute to the ATP site; these read HIGNG, DLR, and GVGEN. Glutamate 381 lines the Mg(2+) pocket.

Belongs to the acetokinase family. Homodimer. It depends on Mg(2+) as a cofactor. Requires Mn(2+) as cofactor.

It localises to the cytoplasm. It catalyses the reaction acetate + ATP = acetyl phosphate + ADP. Its pathway is metabolic intermediate biosynthesis; acetyl-CoA biosynthesis; acetyl-CoA from acetate: step 1/2. In terms of biological role, catalyzes the formation of acetyl phosphate from acetate and ATP. Can also catalyze the reverse reaction. In Oceanobacillus iheyensis (strain DSM 14371 / CIP 107618 / JCM 11309 / KCTC 3954 / HTE831), this protein is Acetate kinase.